The chain runs to 36 residues: Photosystem I reaction center subunit VIII (36 aa).

The helical transmembrane segment at 9-29 threads the bilayer; sequence ILVPLVGLIFPAIAMTSLFIY.

This sequence belongs to the PsaI family.

The protein resides in the plastid. It localises to the chloroplast thylakoid membrane. Its function is as follows. May help in the organization of the PsaL subunit. The chain is Photosystem I reaction center subunit VIII from Tupiella akineta (Green alga).